A 128-amino-acid polypeptide reads, in one-letter code: Fluoride-specific ion channel FluC (128 aa).

Helical transmembrane passes span 3 to 23 (FTTIFYIGFGGALGAILRSFT), 34 to 54 (LSFPLGTLSVNIIGGFFIGFL), 65 to 85 (INLKSFLVTGFLGGLTTFSTF), and 102 to 122 (FLNIASNLLLSLLFCYFGFWI). Na(+)-binding residues include Gly77 and Thr80.

It belongs to the fluoride channel Fluc/FEX (TC 1.A.43) family.

The protein localises to the cell inner membrane. It catalyses the reaction fluoride(in) = fluoride(out). With respect to regulation, na(+) is not transported, but it plays an essential structural role and its presence is essential for fluoride channel function. Its function is as follows. Fluoride-specific ion channel. Important for reducing fluoride concentration in the cell, thus reducing its toxicity. The chain is Fluoride-specific ion channel FluC from Campylobacter fetus subsp. fetus (strain 82-40).